Reading from the N-terminus, the 280-residue chain is Myelin proteolipid protein B (280 aa).

Residues 1 to 10 (MGWHDGCIRC) lie on the Cytoplasmic side of the membrane. 2 S-palmitoyl cysteine lipidation sites follow: Cys-7 and Cys-10. The helical transmembrane segment at 11 to 36 (MVGVPFASVIATVLCFAGVALFCGCG) threads the bilayer. At 37-59 (HEALSGTEKLIETYFSKNYQEYE) the chain is on the extracellular side. A helical membrane pass occupies residues 60–88 (YLIHVINAFQYVIYGIAIFFFLYGILLLA). Residues 89–152 (EGFYTTTAIK…LGKWLGHPDK (64 aa)) are Cytoplasmic-facing. S-palmitoyl cysteine attachment occurs at residues Cys-140 and Cys-142. A helical membrane pass occupies residues 153–179 (FVGVTYVITILWILIFACSAVPVYIYF). Topologically, residues 180 to 239 (NTWVTCQSIAFPGKTTTSVSTLCLDARMYGVLPWNAFPGKVCGTSLLAICKTSEFQMTFH) are extracellular. 2 disulfides stabilise this stretch: Cys-185–Cys-229 and Cys-202–Cys-221. A helical membrane pass occupies residues 240–269 (LFIAAFVGAAATLVALLTYMVGASFNYAVL). At 270 to 280 (RVTGRSDRSKF) the chain is on the cytoplasmic side.

This sequence belongs to the myelin proteolipid protein family.

Its subcellular location is the cell membrane. Its function is as follows. This is the major myelin protein from the central nervous system. It plays an important role in the formation or maintenance of the multilamellar structure of myelin. This chain is Myelin proteolipid protein B (plp1-b), found in Xenopus laevis (African clawed frog).